The following is a 67-amino-acid chain: Alpha-toxin Tf3 (67 aa).

Positions 2 to 63 constitute an LCN-type CS-alpha/beta domain; sequence KDGYPVEGDN…EPTKTNGRCK (62 aa). Cystine bridges form between Cys-12–Cys-62, Cys-16–Cys-38, Cys-24–Cys-45, and Cys-28–Cys-47. Pro-64 bears the Proline amide mark.

Belongs to the long (4 C-C) scorpion toxin superfamily. Sodium channel inhibitor family. Alpha subfamily. As to expression, expressed by the venom gland.

Its subcellular location is the secreted. Its function is as follows. Alpha toxins bind voltage-independently at site-3 of sodium channels (Nav) and inhibit the inactivation of the activated channels, thereby blocking neuronal transmission. The sequence is that of Alpha-toxin Tf3 from Tityus fasciolatus (Central Brazilian scorpion).